A 234-amino-acid polypeptide reads, in one-letter code: Thymidylate kinase (234 aa).

21–28 (GGEGTGKS) contacts ATP.

Belongs to the thymidylate kinase family.

It carries out the reaction dTMP + ATP = dTDP + ADP. In terms of biological role, phosphorylation of dTMP to form dTDP in both de novo and salvage pathways of dTTP synthesis. The sequence is that of Thymidylate kinase from Rhizobium meliloti (strain 1021) (Ensifer meliloti).